We begin with the raw amino-acid sequence, 142 residues long: Small ribosomal subunit protein uS12 (142 aa).

It belongs to the universal ribosomal protein uS12 family. Part of the 30S ribosomal subunit.

In terms of biological role, with S4 and S5 plays an important role in translational accuracy. Located at the interface of the 30S and 50S subunits. This is Small ribosomal subunit protein uS12 from Methanoregula boonei (strain DSM 21154 / JCM 14090 / 6A8).